The sequence spans 312 residues: uncharacterized protein (312 aa).

Positions 1–19 are cleaved as a signal peptide; that stretch reads MFSKYLVTASSLFVALTSA.

This is an uncharacterized protein from Saccharomyces cerevisiae (strain ATCC 204508 / S288c) (Baker's yeast).